The primary structure comprises 802 residues: Ribosomal protein S6 kinase alpha-5 (802 aa).

Positions 1–22 (MEEEGGSSGGAAGTSADGGDGG) are enriched in gly residues. The segment at 1-23 (MEEEGGSSGGAAGTSADGGDGGE) is disordered. The 270-residue stretch at 49–318 (FELLKVLGTG…ADEIKEHLFF (270 aa)) folds into the Protein kinase 1 domain. ATP contacts are provided by residues 55–63 (LGTGAYGKV) and K81. Catalysis depends on D177, which acts as the Proton acceptor. S212 bears the Phosphoserine; by autocatalysis mark. The AGC-kinase C-terminal domain maps to 319–387 (QKINWDDLAA…VAPSILFKRN (69 aa)). S360 bears the Phosphoserine; by MAPK1, MAPK3 and MAPK14 mark. Residues S376 and S381 each carry the phosphoserine; by autocatalysis modification. The region spanning 426–687 (DLKDKPLGEG…MSGLRYNEWL (262 aa)) is the Protein kinase 2 domain. ATP contacts are provided by residues 432-440 (LGEGSFSIC) and K455. The Proton acceptor role is filled by D544. T581 is subject to Phosphothreonine; by MAPK1, MAPK3 and MAPK14. Phosphoserine is present on residues S647, S657, S691, and S695. Position 700 is a phosphothreonine; by MAPK1, MAPK3 and MAPK14 (T700). A disordered region spans residues 741-802 (AKRRKMKKTS…TLFQFSDSVA (62 aa)). Low complexity predominate over residues 749–779 (TSTSTETRSSSSESSHSSSSHSHGKTTPTKT). Phosphoserine; by autocatalysis occurs at positions 750, 752, and 758. Residues 780–802 (LQPSNPADSNNPETLFQFSDSVA) show a composition bias toward polar residues. Phosphoserine is present on S798.

The protein belongs to the protein kinase superfamily. AGC Ser/Thr protein kinase family. S6 kinase subfamily. As to quaternary structure, forms a complex with either MAPK1/ERK2 or MAPK3/ERK1 in quiescent cells which transiently dissociates following mitogenic stimulation. Also associates with MAPK14/p38-alpha. Activated RPS6KA5 associates with and phosphorylates the NF-kappa-B p65 subunit RELA. Interacts with CREBBP and EP300. It depends on Mg(2+) as a cofactor. Post-translationally, ser-376 and Thr-581 phosphorylation is required for kinase activity. Ser-376 and Ser-212 are autophosphorylated by the C-terminal kinase domain, and their phosphorylation is essential for the catalytic activity of the N-terminal kinase domain. Phosphorylated at Ser-360, Thr-581 and Thr-700 by MAPK1/ERK2, MAPK3/ERK1 and MAPK14/p38-alpha. Autophosphorylated at Ser-750, Ser-752 and Ser-758 by the N-terminal kinase domain. Ubiquitinated.

The protein localises to the nucleus. It carries out the reaction L-seryl-[protein] + ATP = O-phospho-L-seryl-[protein] + ADP + H(+). The catalysed reaction is L-threonyl-[protein] + ATP = O-phospho-L-threonyl-[protein] + ADP + H(+). Its activity is regulated as follows. Activated by phosphorylation at Ser-360, Thr-581 and Thr-700 by MAPK1/ERK2, MAPK3/ERK1 and MAPK14/p38-alpha, and by further autophosphorylation of Ser-212, Ser-376 and Ser-381 by the activated C-terminal kinase domain. The active N-terminal kinase domain finally phosphorylates downstream substrates, as well as Ser-750, Ser-752 and Ser-758 in its own C-terminal region. Functionally, serine/threonine-protein kinase that is required for the mitogen or stress-induced phosphorylation of the transcription factors CREB1 and ATF1 and for the regulation of the transcription factors RELA, STAT3 and ETV1/ER81, and that contributes to gene activation by histone phosphorylation and functions in the regulation of inflammatory genes. Phosphorylates CREB1 and ATF1 in response to mitogenic or stress stimuli such as UV-C irradiation, epidermal growth factor (EGF) and anisomycin. Plays an essential role in the control of RELA transcriptional activity in response to TNF and upon glucocorticoid, associates in the cytoplasm with the glucocorticoid receptor NR3C1 and contributes to RELA inhibition and repression of inflammatory gene expression. In skeletal myoblasts is required for phosphorylation of RELA at 'Ser-276' during oxidative stress. In erythropoietin-stimulated cells, is necessary for the 'Ser-727' phosphorylation of STAT3 and regulation of its transcriptional potential. Phosphorylates ETV1/ER81 at 'Ser-191' and 'Ser-216', and thereby regulates its ability to stimulate transcription, which may be important during development and breast tumor formation. Directly represses transcription via phosphorylation of 'Ser-1' of histone H2A. Phosphorylates 'Ser-10' of histone H3 in response to mitogenics, stress stimuli and EGF, which results in the transcriptional activation of several immediate early genes, including proto-oncogenes c-fos/FOS and c-jun/JUN. May also phosphorylate 'Ser-28' of histone H3. Mediates the mitogen- and stress-induced phosphorylation of high mobility group protein 1 (HMGN1/HMG14). In lipopolysaccharide-stimulated primary macrophages, acts downstream of the Toll-like receptor TLR4 to limit the production of pro-inflammatory cytokines. Functions probably by inducing transcription of the MAP kinase phosphatase DUSP1 and the anti-inflammatory cytokine interleukin 10 (IL10), via CREB1 and ATF1 transcription factors. Plays a role in neuronal cell death by mediating the downstream effects of excitotoxic injury. Phosphorylates TRIM7 at 'Ser-107' in response to growth factor signaling via the MEK/ERK pathway, thereby stimulating its ubiquitin ligase activity. The polypeptide is Ribosomal protein S6 kinase alpha-5 (RPS6KA5) (Pongo abelii (Sumatran orangutan)).